The chain runs to 514 residues: Na(+)/H(+) antiporter NhaB (514 aa).

12 helical membrane-spanning segments follow: residues 23 to 43, 52 to 72, 97 to 117, 120 to 140, 144 to 164, 202 to 222, 238 to 258, 303 to 323, 353 to 373, 391 to 411, 447 to 467, and 475 to 495; these read LALL…PFIA, IFTL…LLAI, LLLM…LFIF, LLLS…AAAF, FLDA…FYGI, LMMH…VGEP, FFLR…LTCL, ALIG…VGLI, FTAL…QSLF, LFYL…VGTI, ATPN…APLI, and VWMA…CVEF.

The protein belongs to the NhaB Na(+)/H(+) (TC 2.A.34) antiporter family.

Its subcellular location is the cell inner membrane. The catalysed reaction is 2 Na(+)(in) + 3 H(+)(out) = 2 Na(+)(out) + 3 H(+)(in). Its function is as follows. Na(+)/H(+) antiporter that extrudes sodium in exchange for external protons. The protein is Na(+)/H(+) antiporter NhaB of Escherichia fergusonii (strain ATCC 35469 / DSM 13698 / CCUG 18766 / IAM 14443 / JCM 21226 / LMG 7866 / NBRC 102419 / NCTC 12128 / CDC 0568-73).